Consider the following 709-residue polypeptide: Twinkle homolog protein, chloroplastic/mitochondrial (709 aa).

The transit peptide at 1–16 (MRFLLRLPQIHFRKLS) directs the protein to the chloroplast and mitochondrion. Residues 280-385 (SEVIIVEGEI…KKSEDEHFKD (106 aa)) form the Toprim domain. Mg(2+)-binding residues include glutamate 286, aspartate 348, and aspartate 350. Residues 430-698 (THGHEYGVST…GSYSDSPVTP (269 aa)) enclose the SF4 helicase domain. Residue 460–467 (GIPNSGKS) participates in ATP binding.

Mg(2+) is required as a cofactor. In terms of tissue distribution, expressed in young leaves and shoot apex tissues. Detected in developing tissues such as cotyledons, sepals, pistils and inflorescences. Nearly undetectable in mature leaves.

The protein resides in the plastid. It localises to the chloroplast. The protein localises to the mitochondrion. The enzyme catalyses ATP + H2O = ADP + phosphate + H(+). Has both DNA primase and DNA helicase activities and may be involved in organelle DNA replication. Capable of producing RNA primers of 9 to 18 bases from a single-stranded DNA template. This chain is Twinkle homolog protein, chloroplastic/mitochondrial, found in Arabidopsis thaliana (Mouse-ear cress).